A 727-amino-acid polypeptide reads, in one-letter code: ATP-dependent RNA helicase Ddx1 (727 aa).

The 427-residue stretch at 2–428 (TAFEEFGVLP…AERLMHFPTW (427 aa)) folds into the Helicase ATP-binding domain. Residue 46–53 (AETGSGKT) coordinates ATP. The region spanning 69–246 (RDLEEGKAGK…MQFNFGKTDF (178 aa)) is the B30.2/SPRY domain. The DEAD box motif lies at 370-373 (DEAD). One can recognise a Helicase C-terminal domain in the interval 483–676 (TLSQAVKLLK…QVDKTMDVPV (194 aa)).

The protein belongs to the DEAD box helicase family. DDX1 subfamily.

It carries out the reaction ATP + H2O = ADP + phosphate + H(+). Functionally, acts as an ATP-dependent RNA helicase, able to unwind both RNA-RNA and RNA-DNA duplexes. Possesses 5' single-stranded RNA overhang nuclease activity. This is ATP-dependent RNA helicase Ddx1 (Ddx1) from Drosophila melanogaster (Fruit fly).